A 550-amino-acid chain; its full sequence is Homeobox and leucine zipper protein Homez (550 aa).

Pro residues predominate over residues 1–10 (MVRGWEPPPG). Residues 1–36 (MVRGWEPPPGLDCAISEGHKSEGTMPPNKEASGLSS) are disordered. Residues 55-114 (WTQAAQTSELDSNEHLLKTFSYFPYPSLADIALLCLRYGLQMEKVKTWFMAQRLRCGISW) constitute a DNA-binding region (homeobox 1). The interval 168-199 (GPPTLSKPTQTKGLKVEPEEPSQMPPLPQSHQ) is disordered. Glycyl lysine isopeptide (Lys-Gly) (interchain with G-Cter in SUMO2) cross-links involve residues Lys-182, Lys-200, and Lys-202. Residues 223–265 (LQSSGLSKEQAGRGPNQSHGIGTASWNHSTTVPQPQARDKPPP) form a disordered region. Positions 237–256 (PNQSHGIGTASWNHSTTVPQ) are enriched in polar residues. A Phosphoserine modification is found at Ser-351. DNA-binding regions (homeobox) lie at residues 355–415 (QRQR…KHGQ) and 451–510 (TPPL…AEVV). The short motif at 358–363 (RKTKRK) is the Nuclear localization signal element. Disordered stretches follow at residues 424-465 (VPGA…DIQP) and 512-550 (CLDEEEEEEEEELPEDDEEEEEEEEEDDDDDDDDVIIQD). A Phosphothreonine modification is found at Thr-451. Residues 452-463 (PPLPIPPPPPDI) show a composition bias toward pro residues. A compositionally biased stretch (acidic residues) spans 513–550 (LDEEEEEEEEELPEDDEEEEEEEEEDDDDDDDDVIIQD).

As to quaternary structure, homodimer or heterodimer (Potential). Interacts with HOXC8. As to expression, ubiquitous. Strongly expressed in adult testis and kidney as well as fetal lung and kidney.

The protein resides in the nucleus. May function as a transcriptional regulator. This is Homeobox and leucine zipper protein Homez (HOMEZ) from Homo sapiens (Human).